Consider the following 261-residue polypeptide: Cytochrome c oxidase subunit 3 (261 aa).

Over 1-15 (MTHQTHAYHMVNPSP) the chain is Mitochondrial matrix. Residues 16-34 (WPLTGALSALLMTSGLAMW) form a helical membrane-spanning segment. The Mitochondrial intermembrane portion of the chain corresponds to 35-40 (FHYNSM). Residues 41–66 (LLLTLGLMTNLLTMYQWWRDIVREST) traverse the membrane as a helical segment. Residues 67 to 72 (FQGHHT) are Mitochondrial matrix-facing. Residues 73–105 (LVVQKGLRYGMILFIISEVFFFSGFFWAFYHSS) form a helical membrane-spanning segment. The Mitochondrial intermembrane segment spans residues 106–128 (LAPTPELGGCWPPTGIHPLNPME). Residues 129 to 152 (VPLLNTSVLLASGVSITWAHHSLM) form a helical membrane-spanning segment. The Mitochondrial matrix portion of the chain corresponds to 153–155 (EGN). Residues 156–183 (RKHMLQALFITISLGVYFTLLQASEYYE) form a helical membrane-spanning segment. Topologically, residues 184–190 (APFTISD) are mitochondrial intermembrane. Residues 191-223 (GIYGSTFFVATGFHGLHVIIGSTFLIVCFLRQL) form a helical membrane-spanning segment. Residues 224–232 (KFHFTSNHH) are Mitochondrial matrix-facing. A helical transmembrane segment spans residues 233-256 (FGFEAAAWYWHFVDVVWLFLYVSI). Residues 257-261 (YWWGS) are Mitochondrial intermembrane-facing.

Belongs to the cytochrome c oxidase subunit 3 family. In terms of assembly, component of the cytochrome c oxidase (complex IV, CIV), a multisubunit enzyme composed of 14 subunits. The complex is composed of a catalytic core of 3 subunits MT-CO1, MT-CO2 and MT-CO3, encoded in the mitochondrial DNA, and 11 supernumerary subunits COX4I, COX5A, COX5B, COX6A, COX6B, COX6C, COX7A, COX7B, COX7C, COX8 and NDUFA4, which are encoded in the nuclear genome. The complex exists as a monomer or a dimer and forms supercomplexes (SCs) in the inner mitochondrial membrane with NADH-ubiquinone oxidoreductase (complex I, CI) and ubiquinol-cytochrome c oxidoreductase (cytochrome b-c1 complex, complex III, CIII), resulting in different assemblies (supercomplex SCI(1)III(2)IV(1) and megacomplex MCI(2)III(2)IV(2)).

Its subcellular location is the mitochondrion inner membrane. The catalysed reaction is 4 Fe(II)-[cytochrome c] + O2 + 8 H(+)(in) = 4 Fe(III)-[cytochrome c] + 2 H2O + 4 H(+)(out). Functionally, component of the cytochrome c oxidase, the last enzyme in the mitochondrial electron transport chain which drives oxidative phosphorylation. The respiratory chain contains 3 multisubunit complexes succinate dehydrogenase (complex II, CII), ubiquinol-cytochrome c oxidoreductase (cytochrome b-c1 complex, complex III, CIII) and cytochrome c oxidase (complex IV, CIV), that cooperate to transfer electrons derived from NADH and succinate to molecular oxygen, creating an electrochemical gradient over the inner membrane that drives transmembrane transport and the ATP synthase. Cytochrome c oxidase is the component of the respiratory chain that catalyzes the reduction of oxygen to water. Electrons originating from reduced cytochrome c in the intermembrane space (IMS) are transferred via the dinuclear copper A center (CU(A)) of subunit 2 and heme A of subunit 1 to the active site in subunit 1, a binuclear center (BNC) formed by heme A3 and copper B (CU(B)). The BNC reduces molecular oxygen to 2 water molecules using 4 electrons from cytochrome c in the IMS and 4 protons from the mitochondrial matrix. The protein is Cytochrome c oxidase subunit 3 (MT-CO3) of Ceratotherium simum (White rhinoceros).